The following is a 249-amino-acid chain: Zinc finger protein CG30 (249 aa).

The segment at 8–66 adopts an RING-type zinc-finger fold; sequence CHICCSVGEIKNYFLQPVDAITILPIVELHTCRHQLCVMCVRKIAQRGRDKRVECPMCR.

The polypeptide is Zinc finger protein CG30 (CG30) (Orgyia pseudotsugata (Douglas-fir tussock moth)).